A 317-amino-acid chain; its full sequence is Zinc transporter ZIP3 (317 aa).

At Met1 to Gln3 the chain is on the extracellular side. A helical membrane pass occupies residues Leu4–Leu24. Residues Leu25–Lys42 are Cytoplasmic-facing. A helical membrane pass occupies residues Val43–Leu63. The Extracellular portion of the chain corresponds to Leu64 to Pro85. The helical transmembrane segment at Leu86–Leu106 threads the bilayer. Residues Thr107–Arg172 lie on the Cytoplasmic side of the membrane. Phosphoserine occurs at positions 125 and 129. The helical transmembrane segment at Leu173–Leu193 threads the bilayer. The Extracellular portion of the chain corresponds to Gln194 to Arg199. Residues Val200 to Ile220 traverse the membrane as a helical segment. At Ser221–Ala232 the chain is on the cytoplasmic side. The chain crosses the membrane as a helical span at residues Ala233–Ile253. At Glu254 to Ser265 the chain is on the extracellular side. The helical transmembrane segment at Ala266 to Ala286 threads the bilayer. Residues Lys287–Glu294 lie on the Cytoplasmic side of the membrane. Residues Gln295–Leu315 traverse the membrane as a helical segment. The Extracellular segment spans residues Lys316 to Trp317.

It belongs to the ZIP transporter (TC 2.A.5) family.

The protein resides in the cell membrane. The protein localises to the apical cell membrane. The enzyme catalyses Zn(2+)(in) = Zn(2+)(out). Functionally, transporter for the divalent cation Zn(2+). Mediates the influx of Zn(2+) into cells from extracellular space. Controls Zn(2+) accumulation into dentate gyrus granule cells in the hippocampus. Mediates Zn(2+) reuptake from the secreted milk within the alveolar lumen. This chain is Zinc transporter ZIP3 (Slc39a3), found in Rattus norvegicus (Rat).